The primary structure comprises 204 residues: Adenylyl-sulfate kinase (204 aa).

34–41 (GLSGSGKS) contributes to the ATP binding site. The Phosphoserine intermediate role is filled by serine 108.

Belongs to the APS kinase family.

The catalysed reaction is adenosine 5'-phosphosulfate + ATP = 3'-phosphoadenylyl sulfate + ADP + H(+). The protein operates within sulfur metabolism; hydrogen sulfide biosynthesis; sulfite from sulfate: step 2/3. In terms of biological role, catalyzes the synthesis of activated sulfate. In Phocaeicola vulgatus (strain ATCC 8482 / DSM 1447 / JCM 5826 / CCUG 4940 / NBRC 14291 / NCTC 11154) (Bacteroides vulgatus), this protein is Adenylyl-sulfate kinase.